Consider the following 350-residue polypeptide: Dihydroorotase (350 aa).

His-17 and His-19 together coordinate Zn(2+). Residues 19–21 (HFR) and Asn-45 contribute to the substrate site. 3 residues coordinate Zn(2+): Lys-103, His-140, and His-178. Residue Lys-103 is modified to N6-carboxylysine. His-140 lines the substrate pocket. Substrate is bound at residue Leu-223. Position 251 (Asp-251) interacts with Zn(2+). Asp-251 is a catalytic residue. Substrate-binding residues include His-255 and Ala-267.

This sequence belongs to the metallo-dependent hydrolases superfamily. DHOase family. Class II DHOase subfamily. Homodimer. Zn(2+) serves as cofactor.

It carries out the reaction (S)-dihydroorotate + H2O = N-carbamoyl-L-aspartate + H(+). Its pathway is pyrimidine metabolism; UMP biosynthesis via de novo pathway; (S)-dihydroorotate from bicarbonate: step 3/3. Its function is as follows. Catalyzes the reversible cyclization of carbamoyl aspartate to dihydroorotate. The protein is Dihydroorotase of Photorhabdus laumondii subsp. laumondii (strain DSM 15139 / CIP 105565 / TT01) (Photorhabdus luminescens subsp. laumondii).